We begin with the raw amino-acid sequence, 241 residues long: Ribonuclease PH (241 aa).

Residues arginine 89 and 127 to 129 (GTR) contribute to the phosphate site.

It belongs to the RNase PH family. Homohexameric ring arranged as a trimer of dimers.

The catalysed reaction is tRNA(n+1) + phosphate = tRNA(n) + a ribonucleoside 5'-diphosphate. Phosphorolytic 3'-5' exoribonuclease that plays an important role in tRNA 3'-end maturation. Removes nucleotide residues following the 3'-CCA terminus of tRNAs; can also add nucleotides to the ends of RNA molecules by using nucleoside diphosphates as substrates, but this may not be physiologically important. Probably plays a role in initiation of 16S rRNA degradation (leading to ribosome degradation) during starvation. This Xylella fastidiosa (strain M23) protein is Ribonuclease PH.